The following is a 1657-amino-acid chain: Ras GTPase-activating-like protein IQGAP1 (1657 aa).

The residue at position 2 (Ser-2) is an N-acetylserine. A Phosphoserine modification is found at Ser-2. Positions 44–159 (LCHLEEAKRW…YCIHALSLYL (116 aa)) constitute a Calponin-homology (CH) domain. Phosphotyrosine is present on Tyr-172. At Ser-330 the chain carries Phosphoserine. One can recognise a WW domain in the interval 679–712 (GDNNSKWVKHWVKGGYYYYHNLETQEGGWDEPPN). IQ domains lie at 745–774 (NEGLITRLQARCRGYLVRQEFRSRMNFLKK), 775–804 (QIPAITCIQSQWRGYKQKKAYQDRLAYLRS), 805–834 (HKDEVVKIQSLARMHQARKRYRDRLQYFRD), and 835–864 (HINDIIKIQAFIRANKARDDYKTLINAEDP). Residues 956-1274 (GGLKALSKEK…FFQTACDVPE (319 aa)) form a C1 region. Positions 1020–1269 (YLLLRLFKTA…QKFRRFFQTA (250 aa)) constitute a Ras-GAP domain. Residues 1276–1657 (QDKFNVDEYS…FLLNKKFYGK (382 aa)) are C2. Residues 1410–1448 (TPATSEQEAEHQRAMQRRAIRDAKTPDKMKKSKSVKEDS) are disordered. Basic and acidic residues predominate over residues 1417 to 1448 (EAEHQRAMQRRAIRDAKTPDKMKKSKSVKEDS). Ser-1441 bears the Phosphoserine; by PKC mark. Ser-1443 is subject to Phosphoserine; by PKC/PRKCE.

Interacts with CDC42; the interaction is demonstrated with IQGAP1 in GTP-bound and in nucleotide-free state. Interacts with RAC1. Does not interact with RHOA. Interacts with TSG101. Interacts with PAK6. Interacts with TMEM14B; this interaction increases IQGAP1 phosphorylation and induces its nuclear translocation. Interacts with SASH1. Interacts with PJVK. Interacts with SLC26A4; this interaction enhances the chloride-bicarbonate exchange activity of SLC26A4. Interacts with SVEP1. Interacts with ILK; the interaction is required for localization of IQGAP to the cell cortex. As to quaternary structure, (Microbial infection) Interacts with ebolavirus vp40. In terms of assembly, (Microbial infection) Interacts with human cytomegalovirus protein UL5. (Microbial infection) Interacts with C.jejuni invasion antigen D (CiaD). In terms of processing, phosphorylation of Ser-1443 by PKC/PRKCE prevents interaction between C1 and C2, allowing binding of nucleotide-free CDC42. Ser-1443 phosphorylation enhances the ability to promote neurite outgrowth. Expressed in the placenta, lung, and kidney. A lower level expression is seen in the heart, liver, skeletal muscle and pancreas.

It localises to the cell membrane. Its subcellular location is the nucleus. It is found in the cytoplasm. The protein resides in the cell cortex. The protein localises to the apical cell membrane. It localises to the basolateral cell membrane. In terms of biological role, plays a crucial role in regulating the dynamics and assembly of the actin cytoskeleton. Recruited to the cell cortex by interaction with ILK which allows it to cooperate with its effector DIAPH1 to locally stabilize microtubules and allow stable insertion of caveolae into the plasma membrane. Binds to activated CDC42 but does not stimulate its GTPase activity. Associates with calmodulin. May promote neurite outgrowth. May play a possible role in cell cycle regulation by contributing to cell cycle progression after DNA replication arrest. This Homo sapiens (Human) protein is Ras GTPase-activating-like protein IQGAP1 (IQGAP1).